A 446-amino-acid polypeptide reads, in one-letter code: Carbamoyl phosphate synthase small chain, chloroplastic (446 aa).

The segment covering 1-32 (MAAPPATASAPSLRPSAASPRAAAARSVAVPS) has biased composition (low complexity). The disordered stretch occupies residues 1-44 (MAAPPATASAPSLRPSAASPRAAAARSVAVPSGPRTVGPRRDGG). The transit peptide at 1-50 (MAAPPATASAPSLRPSAASPRAAAARSVAVPSGPRTVGPRRDGGRFLGVR) directs the protein to the chloroplast. The 186-residue stretch at 261–446 (HVVAYDFGIK…FIEMMKNNRL (186 aa)) folds into the Glutamine amidotransferase type-1 domain. The Nucleophile role is filled by C336. Active-site residues include H420 and E422.

This sequence belongs to the CarA family. As to quaternary structure, heterodimer composed of 2 chains; the small (or glutamine) chain promotes the hydrolysis of glutamine to ammonia, which is used by the large (or ammonia) chain to synthesize carbamoyl phosphate.

It localises to the plastid. The protein resides in the chloroplast. The enzyme catalyses hydrogencarbonate + L-glutamine + 2 ATP + H2O = carbamoyl phosphate + L-glutamate + 2 ADP + phosphate + 2 H(+). The catalysed reaction is L-glutamine + H2O = L-glutamate + NH4(+). Its pathway is amino-acid biosynthesis; L-arginine biosynthesis; carbamoyl phosphate from bicarbonate: step 1/1. It participates in pyrimidine metabolism; UMP biosynthesis via de novo pathway; (S)-dihydroorotate from bicarbonate: step 1/3. Functionally, small subunit of the arginine-specific carbamoyl phosphate synthase (CPSase). CPSase catalyzes the formation of carbamoyl phosphate from the ammonia moiety of glutamine, carbonate, and phosphate donated by ATP, the first step of the arginine biosynthetic pathway. The small subunit (glutamine amidotransferase) binds and cleaves glutamine to supply the large subunit with the substrate ammonia. This is Carbamoyl phosphate synthase small chain, chloroplastic (CARA) from Oryza sativa subsp. japonica (Rice).